A 251-amino-acid chain; its full sequence is MQRTLNVGVILCESFISNAQNPVNSYIKIYENVRMFEFAIKLLQESRINFQKILLYVLEEQIPLVEKVVAKYENCWVFRSKHNEVEDIYEAKGFIEDKYKIGLKSSKNQASSYYDNCCFVVLEACRPLTSKKVVKNVYEKAMIDGAAVAVLPFERQLVCGDNTKAVRQLKDKGNMNYWRQSSTWELQFPQAYTLNKLNQYHKNLFMKARNMLDLMNISAKNPLSIVDGSAYSFRVVTSLDFEILLGILRNG.

This is an uncharacterized protein from Mycoplasma pneumoniae (strain ATCC 29342 / M129 / Subtype 1) (Mycoplasmoides pneumoniae).